Consider the following 238-residue polypeptide: Ribosomal RNA small subunit methyltransferase G (238 aa).

Residues G77, F82, 128–129, and R146 contribute to the S-adenosyl-L-methionine site; that span reads AE. The segment at 216–238 is disordered; sequence KKRQTPKKYPRKPGTPNKEPLLK.

It belongs to the methyltransferase superfamily. RNA methyltransferase RsmG family.

The protein resides in the cytoplasm. In terms of biological role, specifically methylates the N7 position of guanine in position 535 of 16S rRNA. The protein is Ribosomal RNA small subunit methyltransferase G of Macrococcus caseolyticus (strain JCSC5402) (Macrococcoides caseolyticum).